Consider the following 720-residue polypeptide: Casein kinase II subunit alpha'-interacting protein (720 aa).

Over residues 227–249 (LSSPSFTNRLQRNSFPPTSSSLE) the composition is skewed to polar residues. 5 disordered regions span residues 227-250 (LSSP…SLEF), 264-303 (KPLK…SRRL), 333-366 (QNTA…SPKP), 602-640 (TQVQ…VDPT), and 678-698 (LRQS…KCLK). Positions 608–626 (SSSSSSSCSSVSSSSSASS) are enriched in low complexity. The span at 630–640 (PSPPTPWVDPT) shows a compositional bias: pro residues. Basic residues predominate over residues 687-698 (KPVRSHNSKCLK).

As to quaternary structure, interacts (via C-terminus) with CSNK2A2. In terms of processing, phosphorylated by CK2 (casein kinase II), specifically by complexes containing catalytic subunit CSNK2A2. As to expression, expressed exclusively in testis (at protein level). Within testis, expressed mainly in the intermediate compartment of the seminiferous tubules with weaker expression in the basal and adluminal compartments.

Its subcellular location is the nucleus. Functionally, may play a role in chromatin regulation of male germ cells. In Mus musculus (Mouse), this protein is Casein kinase II subunit alpha'-interacting protein.